We begin with the raw amino-acid sequence, 140 residues long: Mitochondrial import receptor subunit TOM22 homolog (140 aa).

The segment covering 1–11 has biased composition (low complexity); that stretch reads MAAAAAGPGAP. The tract at residues 1–40 is disordered; the sequence is MAAAAAGPGAPLSADELLPKGDAEKPEEELEEEDDEELDE. The Cytoplasmic portion of the chain corresponds to 1-81; the sequence is MAAAAAGPGA…AQKMYRFSRA (81 aa). Residue S13 is modified to Phosphoserine. A compositionally biased stretch (acidic residues) spans 25–40; sequence KPEEELEEEDDEELDE. An import sequence; necessary for mitochondrion outer membrane localization and integration in the TOM complex region spans residues 39–48; the sequence is DETLSERLWG. Position 41 is a phosphothreonine (T41). S43 carries the post-translational modification Phosphoserine. Residues 81-101 form a TMD; necessary for mitochondrion outer membrane localization and integration in the TOM complex region; sequence AALWIGTTSFMILVLPVVFET. A helical membrane pass occupies residues 82-101; it reads ALWIGTTSFMILVLPVVFET. Residues 102–140 lie on the Mitochondrial intermembrane side of the membrane; it reads EKLQMEQQQQLQQRQILLGPNTGLSGGMPGALPSLPGKI. The interval 121–140 is C-tail signal; necessary for mitochondrion outer membrane localization and integration in the TOM complex; it reads PNTGLSGGMPGALPSLPGKI.

The protein belongs to the Tom22 family. As to quaternary structure, forms part of the preprotein translocase complex of the outer mitochondrial membrane (TOM complex) which consists of at least 7 different proteins (TOMM5, TOMM6, TOMM7, TOMM20, TOMM22, TOMM40 and TOMM70). Interacts with PPP2R2B and TOMM40.

It localises to the mitochondrion outer membrane. In terms of biological role, central receptor component of the translocase of the outer membrane of mitochondria (TOM complex) responsible for the recognition and translocation of cytosolically synthesized mitochondrial preproteins. Together with the peripheral receptor TOM20 functions as the transit peptide receptor and facilitates the movement of preproteins into the translocation pore. Required for the translocation across the mitochondrial outer membrane of cytochrome P450 monooxygenases. This Bos taurus (Bovine) protein is Mitochondrial import receptor subunit TOM22 homolog (TOMM22).